Reading from the N-terminus, the 356-residue chain is Heparan sulfate 2-O-sulfotransferase 1 (356 aa).

The Cytoplasmic portion of the chain corresponds to 1-11 (MGLLRIMLPPK). A helical; Signal-anchor for type II membrane protein transmembrane segment spans residues 12–28 (LQLLAVLVFGVAVLFLE). A coiled-coil region spans residues 24-51 (VLFLENQIQKLEESRGKLERAIARHEVR). Topologically, residues 29 to 356 (NQIQKLEESR…FYEKIYPKSN (328 aa)) are lumenal. The adenosine 3',5'-bisphosphate site is built by Lys-83, Thr-84, Ala-85, Ser-86, Thr-87, and Ser-88. Residues Asn-108 and Asn-127 are each glycosylated (N-linked (GlcNAc...) asparagine). Catalysis depends on residues His-140 and His-142. Arg-164 and Ser-172 together coordinate adenosine 3',5'-bisphosphate. 2 disulfide bridges follow: Cys-201–Cys-209 and Cys-222–Cys-228. Residues Tyr-279, Ser-285, Thr-290, and Lys-293 each coordinate adenosine 3',5'-bisphosphate.

This sequence belongs to the sulfotransferase 3 family. Homotrimer. As to expression, expressed in heart, limb, head and trunk. At stages 20 and 24, it is expressed in the most regions of the first and second pharyngeal arche. In both wing and leg buds, it is detected at the overlying ectoderm and mesenchyme throughout stages 21, 23 and 24.

The protein resides in the golgi apparatus membrane. Its function is as follows. Catalyzes the transfer of a sulfo group from 3'-phospho-5'-adenylyl sulfate (PAPS) to the 2-OH position of iduronic acid (IdoA) or glucuronic acid (GlcA) within the heparan sulfate (HS) chain and participates in HS biosynthesis. The sequence is that of Heparan sulfate 2-O-sulfotransferase 1 from Gallus gallus (Chicken).